Consider the following 512-residue polypeptide: Proline--tRNA ligase (512 aa).

Over residues 460-470 (SDEDDEQDTTD) the composition is skewed to acidic residues. The disordered stretch occupies residues 460–484 (SDEDDEQDTTDENMGVNNDTTVESN).

It belongs to the class-II aminoacyl-tRNA synthetase family. ProS type 3 subfamily. Homodimer.

It is found in the cytoplasm. It carries out the reaction tRNA(Pro) + L-proline + ATP = L-prolyl-tRNA(Pro) + AMP + diphosphate. Functionally, catalyzes the attachment of proline to tRNA(Pro) in a two-step reaction: proline is first activated by ATP to form Pro-AMP and then transferred to the acceptor end of tRNA(Pro). This Haloquadratum walsbyi (strain DSM 16790 / HBSQ001) protein is Proline--tRNA ligase.